The following is a 394-amino-acid chain: Teichoic acid poly(glycerol phosphate) polymerase (394 aa).

It belongs to the CDP-glycerol glycerophosphotransferase family.

It localises to the cell membrane. It carries out the reaction 4-O-[(2R)-glycerylphospho]-N-acetyl-beta-D-mannosaminyl-(1-&gt;4)-N-acetyl-alpha-D-glucosaminyl di-trans,octa-cis-undecaprenyl diphosphate + n CDP-glycerol = 4-O-{[(2R)-1-glycerylphospho](n)-(2R)-1-glycerylphospho}-N-acetyl-beta-D-mannosaminyl-(1-&gt;4)-N-acetyl-alpha-D-glucosaminyl undecaprenyl diphosphate + n CMP + n H(+). Functionally, catalyzes the addition of further 2-8 glycerol phosphate units from CDP-glycerol to the single glycerol phosphate unit bound to the prenolpyrophosphate-linked disaccharide. The function in the cell is unknown since the product is not part of the poly(ribitol phosphate) teichoic acid found in the cell walls. This is Teichoic acid poly(glycerol phosphate) polymerase (tarF) from Bacillus spizizenii (strain ATCC 23059 / NRRL B-14472 / W23) (Bacillus subtilis subsp. spizizenii).